The primary structure comprises 439 residues: Xylose isomerase (439 aa).

Residues H99 and D102 contribute to the active site. The Mg(2+) site is built by E230, E266, H269, D294, D305, D307, and D337.

This sequence belongs to the xylose isomerase family. In terms of assembly, homotetramer. It depends on Mg(2+) as a cofactor.

The protein localises to the cytoplasm. The enzyme catalyses alpha-D-xylose = alpha-D-xylulofuranose. This chain is Xylose isomerase, found in Shouchella clausii (strain KSM-K16) (Alkalihalobacillus clausii).